We begin with the raw amino-acid sequence, 356 residues long: Protein-glutamate methylesterase/protein-glutamine glutaminase 2 (356 aa).

The region spanning 4 to 121 (KVLIVDDSAV…KGFLEESSHE (118 aa)) is the Response regulatory domain. The residue at position 55 (Asp55) is a 4-aspartylphosphate. In terms of domain architecture, CheB-type methylesterase spans 169–356 (FATTERIIAI…LELIAKAICR (188 aa)). Residues Ser181, His207, and Asp303 contribute to the active site.

It belongs to the CheB family. Post-translationally, phosphorylated by CheA. Phosphorylation of the N-terminal regulatory domain activates the methylesterase activity.

It localises to the cytoplasm. The enzyme catalyses [protein]-L-glutamate 5-O-methyl ester + H2O = L-glutamyl-[protein] + methanol + H(+). It catalyses the reaction L-glutaminyl-[protein] + H2O = L-glutamyl-[protein] + NH4(+). Its function is as follows. Involved in chemotaxis. Part of a chemotaxis signal transduction system that modulates chemotaxis in response to various stimuli. Catalyzes the demethylation of specific methylglutamate residues introduced into the chemoreceptors (methyl-accepting chemotaxis proteins or MCP) by CheR. Also mediates the irreversible deamidation of specific glutamine residues to glutamic acid. This chain is Protein-glutamate methylesterase/protein-glutamine glutaminase 2, found in Chromobacterium violaceum (strain ATCC 12472 / DSM 30191 / JCM 1249 / CCUG 213 / NBRC 12614 / NCIMB 9131 / NCTC 9757 / MK).